The sequence spans 193 residues: MAFELPDLPYKLNALEPHISQETLEYHHGKHHRAYVNKLNKLIEGTPFEKEPLEEIIRKSDGGIFNNAAQHWNHTFYWHCMSPDGGGDPSGELASAIDKTFGSLEKFKALFTDSANNHFGSGWAWLVKDNNGKLEVLSTVNARNPMTEGKKPLMTCDVWEHAYYIDTRNDRPKYVNNFWQVVNWDFVMKNFKS.

The Fe cation site is built by His-27, His-74, Asp-157, and His-161.

It belongs to the iron/manganese superoxide dismutase family. As to quaternary structure, homodimer. It depends on Fe cation as a cofactor.

It carries out the reaction 2 superoxide + 2 H(+) = H2O2 + O2. Its function is as follows. Destroys superoxide anion radicals which are normally produced within the cells and which are toxic to biological systems. In Coxiella burnetii (strain RSA 493 / Nine Mile phase I), this protein is Superoxide dismutase [Fe] (sodB).